A 449-amino-acid polypeptide reads, in one-letter code: Asparagine--tRNA ligase (449 aa).

This sequence belongs to the class-II aminoacyl-tRNA synthetase family. Homodimer.

The protein localises to the cytoplasm. The enzyme catalyses tRNA(Asn) + L-asparagine + ATP = L-asparaginyl-tRNA(Asn) + AMP + diphosphate + H(+). This is Asparagine--tRNA ligase from Mesomycoplasma hyopneumoniae (strain 232) (Mycoplasma hyopneumoniae).